The sequence spans 290 residues: MGKGLALDIGGTKIAVAVVTESGMLIGRQQIATPRGGAGQLAAALETLIAPYRHQVDFIAVASTGIISGGRLTALNPANLGGLADFPLYDCIRSISDLPCVLLNDGQAAAWAEYQALGDKNDNMMFVTVSTGVGGGIILNKKLLVGQRGLAGHIGHTLSDPHGVLCGCGRRGCVESVASGTAIGAETLGWKQPVSAATVFDMAQQGDAQAGKVINRSAAAIAQMLADMKMALDLEVVILGGSVGLAVGYLERVVAAQKTLPGIYRVPVQEAHHRQDSGLLGAALWARTSL.

ATP contacts are provided by residues 6 to 13 and 132 to 139; these read ALDIGGTK and GVGGGIIL. Zn(2+) contacts are provided by His156, Cys166, Cys168, and Cys173.

Belongs to the ROK (NagC/XylR) family. NanK subfamily. As to quaternary structure, homodimer.

It catalyses the reaction an N-acyl-D-mannosamine + ATP = an N-acyl-D-mannosamine 6-phosphate + ADP + H(+). It participates in amino-sugar metabolism; N-acetylneuraminate degradation; D-fructose 6-phosphate from N-acetylneuraminate: step 2/5. Catalyzes the phosphorylation of N-acetylmannosamine (ManNAc) to ManNAc-6-P. In Yersinia pestis (strain Pestoides F), this protein is N-acetylmannosamine kinase.